A 367-amino-acid polypeptide reads, in one-letter code: Phosphoribosylaminoimidazole-succinocarboxamide synthase (367 aa).

Belongs to the SAICAR synthetase family.

It catalyses the reaction 5-amino-1-(5-phospho-D-ribosyl)imidazole-4-carboxylate + L-aspartate + ATP = (2S)-2-[5-amino-1-(5-phospho-beta-D-ribosyl)imidazole-4-carboxamido]succinate + ADP + phosphate + 2 H(+). It functions in the pathway purine metabolism; IMP biosynthesis via de novo pathway; 5-amino-1-(5-phospho-D-ribosyl)imidazole-4-carboxamide from 5-amino-1-(5-phospho-D-ribosyl)imidazole-4-carboxylate: step 1/2. In Aliivibrio fischeri (strain MJ11) (Vibrio fischeri), this protein is Phosphoribosylaminoimidazole-succinocarboxamide synthase.